Here is a 171-residue protein sequence, read N- to C-terminus: Tubulin polymerization-promoting protein family member 2 (171 aa).

The tract at residues 120–171 (LTDTSKYTGTHKERFDESGKGKGIAGREDVTDNSGYVSGYKGAGTYDKKGSN) is disordered. Residues 129–149 (THKERFDESGKGKGIAGREDV) are compositionally biased toward basic and acidic residues.

This sequence belongs to the TPPP family.

The protein localises to the cytoplasm. It is found in the cytosol. The protein resides in the cell projection. It localises to the cilium. Its subcellular location is the flagellum. In terms of biological role, probable regulator of microtubule dynamics required for sperm motility. In contrast to other members of the family, has no microtubule bundling activity. This chain is Tubulin polymerization-promoting protein family member 2, found in Bos taurus (Bovine).